Consider the following 228-residue polypeptide: Eukaryotic translation initiation factor 6 (228 aa).

This sequence belongs to the eIF-6 family. As to quaternary structure, monomer. Associates with the 60S ribosomal subunit.

The protein localises to the cytoplasm. It localises to the nucleus. Its subcellular location is the nucleolus. Its function is as follows. Binds to the 60S ribosomal subunit and prevents its association with the 40S ribosomal subunit to form the 80S initiation complex in the cytoplasm. May also be involved in ribosome biogenesis. In Guillardia theta (Cryptophyte), this protein is Eukaryotic translation initiation factor 6.